Consider the following 328-residue polypeptide: Beta-ketoacyl-[acyl-carrier-protein] synthase III (328 aa).

Active-site residues include C122 and H255. The segment at 256 to 260 (QANIR) is ACP-binding. Residue N285 is part of the active site.

This sequence belongs to the thiolase-like superfamily. FabH family. Homodimer.

The protein resides in the cytoplasm. The enzyme catalyses malonyl-[ACP] + acetyl-CoA + H(+) = 3-oxobutanoyl-[ACP] + CO2 + CoA. It functions in the pathway lipid metabolism; fatty acid biosynthesis. Catalyzes the condensation reaction of fatty acid synthesis by the addition to an acyl acceptor of two carbons from malonyl-ACP. Catalyzes the first condensation reaction which initiates fatty acid synthesis and may therefore play a role in governing the total rate of fatty acid production. Possesses both acetoacetyl-ACP synthase and acetyl transacylase activities. Its substrate specificity determines the biosynthesis of branched-chain and/or straight-chain of fatty acids. This is Beta-ketoacyl-[acyl-carrier-protein] synthase III from Polynucleobacter necessarius subsp. necessarius (strain STIR1).